Reading from the N-terminus, the 187-residue chain is Cytochrome b-245 chaperone 1 (187 aa).

Residues 20-42 (GIRSWSLLVGILSIGLAAAYYSG) form a helical membrane-spanning segment. At Ser168 the chain carries Phosphoserine.

This sequence belongs to the CYBC1 family. Interacts with CYBB; CYBC1 may act as a chaperone stabilizing Cytochrome b-245 heterodimer. In terms of tissue distribution, highly expressed in macrophages, neutrophils and monocytes.

The protein localises to the endoplasmic reticulum membrane. Its function is as follows. Functions as a chaperone necessary for a stable expression of the CYBA and CYBB subunits of the cytochrome b-245 heterodimer. Controls the phagocyte respiratory burst and is essential for innate immunity. The chain is Cytochrome b-245 chaperone 1 from Homo sapiens (Human).